The chain runs to 226 residues: Biosynthetic peptidoglycan transglycosylase (226 aa).

A helical transmembrane segment spans residues 10–30; it reads IIMTLLALLILPYLLIPVYAL.

Belongs to the glycosyltransferase 51 family.

It localises to the cell inner membrane. It catalyses the reaction [GlcNAc-(1-&gt;4)-Mur2Ac(oyl-L-Ala-gamma-D-Glu-L-Lys-D-Ala-D-Ala)](n)-di-trans,octa-cis-undecaprenyl diphosphate + beta-D-GlcNAc-(1-&gt;4)-Mur2Ac(oyl-L-Ala-gamma-D-Glu-L-Lys-D-Ala-D-Ala)-di-trans,octa-cis-undecaprenyl diphosphate = [GlcNAc-(1-&gt;4)-Mur2Ac(oyl-L-Ala-gamma-D-Glu-L-Lys-D-Ala-D-Ala)](n+1)-di-trans,octa-cis-undecaprenyl diphosphate + di-trans,octa-cis-undecaprenyl diphosphate + H(+). It participates in cell wall biogenesis; peptidoglycan biosynthesis. In terms of biological role, peptidoglycan polymerase that catalyzes glycan chain elongation from lipid-linked precursors. This is Biosynthetic peptidoglycan transglycosylase from Agrobacterium fabrum (strain C58 / ATCC 33970) (Agrobacterium tumefaciens (strain C58)).